Consider the following 57-residue polypeptide: Large ribosomal subunit protein bL32 (57 aa).

The disordered stretch occupies residues 1-23 (MAVPKKKTSKSKRDKRRATWRHK).

The protein belongs to the bacterial ribosomal protein bL32 family.

This chain is Large ribosomal subunit protein bL32, found in Trichormus variabilis (strain ATCC 29413 / PCC 7937) (Anabaena variabilis).